The chain runs to 214 residues: Probable transaldolase (214 aa).

K83 acts as the Schiff-base intermediate with substrate in catalysis.

Belongs to the transaldolase family. Type 3B subfamily.

Its subcellular location is the cytoplasm. It carries out the reaction D-sedoheptulose 7-phosphate + D-glyceraldehyde 3-phosphate = D-erythrose 4-phosphate + beta-D-fructose 6-phosphate. It functions in the pathway carbohydrate degradation; pentose phosphate pathway; D-glyceraldehyde 3-phosphate and beta-D-fructose 6-phosphate from D-ribose 5-phosphate and D-xylulose 5-phosphate (non-oxidative stage): step 2/3. In terms of biological role, transaldolase is important for the balance of metabolites in the pentose-phosphate pathway. This Citrifermentans bemidjiense (strain ATCC BAA-1014 / DSM 16622 / JCM 12645 / Bem) (Geobacter bemidjiensis) protein is Probable transaldolase.